Consider the following 422-residue polypeptide: UPF0229 protein Spro_2732 (422 aa).

Residues 77 to 90 are compositionally biased toward basic and acidic residues; the sequence is PGNDHFVQNDRVER. Residues 77 to 109 are disordered; the sequence is PGNDHFVQNDRVERPQGGGGGGSGQGNASQDGE. The segment covering 92–101 has biased composition (gly residues); that stretch reads QGGGGGGSGQ.

The protein belongs to the UPF0229 family.

The sequence is that of UPF0229 protein Spro_2732 from Serratia proteamaculans (strain 568).